Consider the following 194-residue polypeptide: ATP-dependent Clp protease proteolytic subunit (194 aa).

S98 serves as the catalytic Nucleophile. Residue H123 is part of the active site.

It belongs to the peptidase S14 family. In terms of assembly, fourteen ClpP subunits assemble into 2 heptameric rings which stack back to back to give a disk-like structure with a central cavity, resembling the structure of eukaryotic proteasomes.

The protein resides in the cytoplasm. It carries out the reaction Hydrolysis of proteins to small peptides in the presence of ATP and magnesium. alpha-casein is the usual test substrate. In the absence of ATP, only oligopeptides shorter than five residues are hydrolyzed (such as succinyl-Leu-Tyr-|-NHMec, and Leu-Tyr-Leu-|-Tyr-Trp, in which cleavage of the -Tyr-|-Leu- and -Tyr-|-Trp bonds also occurs).. Functionally, cleaves peptides in various proteins in a process that requires ATP hydrolysis. Has a chymotrypsin-like activity. Plays a major role in the degradation of misfolded proteins. The polypeptide is ATP-dependent Clp protease proteolytic subunit (Staphylococcus epidermidis (strain ATCC 35984 / DSM 28319 / BCRC 17069 / CCUG 31568 / BM 3577 / RP62A)).